The chain runs to 688 residues: MSKELKLFRNFGIMAHIDAGKTTTSERILYHTGKNHKIGETHDGAATMDWMAQEKERGITITSAATYAKWKGHSLNLIDTPGHVDFTVEVERSLRVLDGAVAVLDGQNGVEPQTETVWRQATKYNVPRIVFVNKMDKTGADFYYSIETMKNRLGVKATAIQIPIGAEADFVGSIDLIEMKAYIYDGKADEEYKIEDIPADYLTKAQVMRSQMIDDVAVFDDEVMEKYLSGEELSHEDIKKCIRKGVISTELYPVLCGTAFKNKGVKKLLDAVVDFLPSPIDVPPIKGVDDHGNPIEYHNDPNEPFAALAFKVATDPFVGRLTYIRVYSGKLDKGTYIYNATKDKKERISRLVKMHSNNRDEIDSISAGDICAVIGLKDTTTGDTICDEKKPVILEQMVFAEPVISLSVEPKTKADQEKMSLALSKLAEEDPTFRTYTNEETGQTIIAGMGELHLDVLVDRMRREFNVQVNVGAPQVSYRETFTEVADAEGKYIKQSGGRGQYGHVWIKFEPNHDKGFEFVDNIVGGKVPKEYIKEVENGLIEALTSGPIAGYQTIDVKATIFDGSYHDVDSSGMAYKIAASLAFKEAAKVCKPVLLEPIMSVDVTTPDDYFGTVMGDISKRRGVIEGQEQRGNAQAIKAKVPLSEMFGYATDLRSNTQGRGQYIMQFSHYAQAPKSVTEEVMVARAKK.

In terms of domain architecture, tr-type G spans 6 to 280 (KLFRNFGIMA…AVVDFLPSPI (275 aa)). Residues 15–22 (AHIDAGKT), 79–83 (DTPGH), and 133–136 (NKMD) each bind GTP.

This sequence belongs to the TRAFAC class translation factor GTPase superfamily. Classic translation factor GTPase family. EF-G/EF-2 subfamily.

It localises to the cytoplasm. Catalyzes the GTP-dependent ribosomal translocation step during translation elongation. During this step, the ribosome changes from the pre-translocational (PRE) to the post-translocational (POST) state as the newly formed A-site-bound peptidyl-tRNA and P-site-bound deacylated tRNA move to the P and E sites, respectively. Catalyzes the coordinated movement of the two tRNA molecules, the mRNA and conformational changes in the ribosome. In Ureaplasma parvum serovar 3 (strain ATCC 27815 / 27 / NCTC 11736), this protein is Elongation factor G.